The chain runs to 313 residues: Methionyl-tRNA formyltransferase (313 aa).

109–112 (SLLP) contributes to the (6S)-5,6,7,8-tetrahydrofolate binding site.

It belongs to the Fmt family.

It catalyses the reaction L-methionyl-tRNA(fMet) + (6R)-10-formyltetrahydrofolate = N-formyl-L-methionyl-tRNA(fMet) + (6S)-5,6,7,8-tetrahydrofolate + H(+). Attaches a formyl group to the free amino group of methionyl-tRNA(fMet). The formyl group appears to play a dual role in the initiator identity of N-formylmethionyl-tRNA by promoting its recognition by IF2 and preventing the misappropriation of this tRNA by the elongation apparatus. The polypeptide is Methionyl-tRNA formyltransferase (Thermotoga maritima (strain ATCC 43589 / DSM 3109 / JCM 10099 / NBRC 100826 / MSB8)).